The primary structure comprises 184 residues: Ribosome-recycling factor (184 aa).

The disordered stretch occupies residues 137–158 (DSIKAKQKDGIPEDEAKRGQDE).

The protein belongs to the RRF family.

It localises to the cytoplasm. Responsible for the release of ribosomes from messenger RNA at the termination of protein biosynthesis. May increase the efficiency of translation by recycling ribosomes from one round of translation to another. This is Ribosome-recycling factor from Desulforamulus reducens (strain ATCC BAA-1160 / DSM 100696 / MI-1) (Desulfotomaculum reducens).